Consider the following 450-residue polypeptide: Citrate/malate-proton symporter (450 aa).

The Cytoplasmic segment spans residues M1–K32. The chain crosses the membrane as a helical span at residues V33 to M53. The Extracellular segment spans residues H54–S64. The chain crosses the membrane as a helical span at residues I65–V85. Over R86–S87 the chain is Cytoplasmic. A helical membrane pass occupies residues I88 to L108. Residues P109–E118 are Extracellular-facing. The helical transmembrane segment at F119 to L139 threads the bilayer. Residues G140–K152 lie on the Cytoplasmic side of the membrane. Residues I153–T173 form a helical membrane-spanning segment. At L174–A217 the chain is on the extracellular side. The chain crosses the membrane as a helical span at residues F218–L238. Over L239–Q273 the chain is Cytoplasmic. The disordered stretch occupies residues W249–S268. The chain crosses the membrane as a helical span at residues M274–G294. M295 is a topological domain (extracellular). Residues L296–I316 traverse the membrane as a helical segment. The Cytoplasmic portion of the chain corresponds to K317–R335. A helical membrane pass occupies residues F336–W356. The Extracellular segment spans residues D357 to N364. The helical transmembrane segment at L365–T385 threads the bilayer. At G386–Q428 the chain is on the cytoplasmic side. A helical transmembrane segment spans residues V429–L446. The Extracellular segment spans residues H447–Y450.

The protein belongs to the 2-hydroxycarboxylate transporter (2-HCT) (TC 2.A.24) family.

It is found in the cell membrane. The catalysed reaction is citrate(in) + 3 H(+)(in) = citrate(out) + 3 H(+)(out). The enzyme catalyses (S)-malate(in) + 2 H(+)(in) = (S)-malate(out) + 2 H(+)(out). The uptake activity is inhibited by divalent metal ions such as Ca(2+), Mg(2+) and Ni(2+). Its function is as follows. Proton motive force-driven secondary transporter that catalyzes the uptake of both citrate and malate. Is an electroneutral proton-solute symporter: the number of protons transported is equal to the valence of the transported anions. Translocates the free citrate and malate anions. Citramalate binds to the transporter, but it is not translocated. Is strictly stereoselective, recognizing only the (S)-enantiomers of malate and citramalate. The polypeptide is Citrate/malate-proton symporter (Bacillus subtilis (strain 168)).